Consider the following 921-residue polypeptide: Collagen alpha-1(IX) chain (921 aa).

The signal sequence occupies residues methionine 1–alanine 23. The nonhelical region (NC4) stretch occupies residues alanine 24–arginine 268. Intrachain disulfides connect cysteine 44–cysteine 242 and cysteine 198–cysteine 252. A Laminin G-like domain is found at glycine 50 to proline 244. N-linked (GlcNAc...) asparagine glycosylation occurs at asparagine 171. Residues aspartate 213, aspartate 215, and histidine 253 each contribute to the Zn(2+) site. Disordered stretches follow at residues glutamate 254 to aspartate 759 and arginine 783 to serine 905. Collagen-like domains are found at residues glycine 269–alanine 324, aspartate 325–glycine 356, glycine 358–glycine 403, proline 416–glycine 472, isoleucine 473–lysine 516, glutamate 587–glycine 643, glycine 655–glycine 712, and leucine 713–arginine 755. The segment at glycine 269–histidine 405 is triple-helical region (COL3). Pro residues-rich tracts occupy residues glutamate 273–valine 285 and lysine 298–alanine 307. Residues threonine 368–aspartate 383 show a composition bias toward low complexity. Pro residues predominate over residues arginine 387–proline 398. The segment at aspartate 406 to proline 417 is nonhelical region (NC3). A triple-helical region (COL2) region spans residues glycine 418 to alanine 756. The span at aspartate 479–aspartate 489 shows a compositional bias: basic and acidic residues. 2 stretches are compositionally biased toward low complexity: residues asparagine 602–glutamine 621 and leucine 630–leucine 650. The nonhelical region (NC2) stretch occupies residues proline 757 to serine 786. The triple-helical region (COL1) stretch occupies residues glycine 787–cysteine 901. Collagen-like domains lie at glycine 790–glycine 847 and arginine 848–glycine 899. The span at arginine 794 to proline 804 shows a compositional bias: pro residues. Basic and acidic residues predominate over residues proline 833 to proline 845. Residues valine 888 to leucine 897 show a composition bias toward pro residues. Residues glutamate 902–proline 921 form a nonhelical region (NC1) region.

The protein belongs to the fibril-associated collagens with interrupted helices (FACIT) family. Heterotrimer of an alpha 1(IX), an alpha 2(IX) and an alpha 3(IX) chain. In terms of processing, covalently linked to the telopeptides of type II collagen by lysine-derived cross-links. Prolines at the third position of the tripeptide repeating unit (G-X-Y) are hydroxylated in some or all of the chains.

It is found in the secreted. The protein localises to the extracellular space. Its subcellular location is the extracellular matrix. Its function is as follows. Structural component of hyaline cartilage and vitreous of the eye. In Homo sapiens (Human), this protein is Collagen alpha-1(IX) chain (COL9A1).